A 228-amino-acid polypeptide reads, in one-letter code: Uracil-DNA glycosylase (228 aa).

Aspartate 71 functions as the Proton acceptor in the catalytic mechanism.

Belongs to the uracil-DNA glycosylase (UDG) superfamily. UNG family.

It is found in the cytoplasm. The enzyme catalyses Hydrolyzes single-stranded DNA or mismatched double-stranded DNA and polynucleotides, releasing free uracil.. In terms of biological role, excises uracil residues from the DNA which can arise as a result of misincorporation of dUMP residues by DNA polymerase or due to deamination of cytosine. The protein is Uracil-DNA glycosylase of Thermobifida fusca (strain YX).